The sequence spans 657 residues: N-acetylgalactosaminyltransferase 7 (657 aa).

The Cytoplasmic portion of the chain corresponds to 1 to 6; sequence MRLKIG. A helical; Signal-anchor for type II membrane protein transmembrane segment spans residues 7–29; sequence FILRSLLVVGSFLGLVVLWSSLT. Residues 30–657 lie on the Lumenal side of the membrane; the sequence is PRPDDPSPLS…KWEMNNIHSV (628 aa). The tract at residues 31–65 is disordered; it reads RPDDPSPLSRMREDRDVNDPMPNRGGNGLAPGEDR. Disulfide bonds link Cys-197-Cys-435, Cys-426-Cys-507, Cys-545-Cys-562, Cys-585-Cys-600, and Cys-625-Cys-640. A catalytic subdomain A region spans residues 206–317; that stretch reads LLTSSVVIVF…VNWYAPLVAP (112 aa). Residues Asp-247 and Arg-277 each coordinate substrate. Mn(2+)-binding residues include Asp-301 and His-303. The tract at residues 381 to 443 is catalytic subdomain B; the sequence is PYRSPAMAGG…PCSRVGHIYR (63 aa). A substrate-binding site is contributed by Trp-412. His-440 lines the Mn(2+) pocket. Arg-443 is a substrate binding site. The Ricin B-type lectin domain occupies 532–652; it reads VDWGEIRGFE…SKTTQKWEMN (121 aa).

This sequence belongs to the glycosyltransferase 2 family. GalNAc-T subfamily. Mn(2+) serves as cofactor. Widely expressed. Expressed in uterus, retina, kidney, small intestine, omentum, stomach and CNS.

It is found in the golgi apparatus membrane. The enzyme catalyses L-seryl-[protein] + UDP-N-acetyl-alpha-D-galactosamine = a 3-O-[N-acetyl-alpha-D-galactosaminyl]-L-seryl-[protein] + UDP + H(+). The catalysed reaction is L-threonyl-[protein] + UDP-N-acetyl-alpha-D-galactosamine = a 3-O-[N-acetyl-alpha-D-galactosaminyl]-L-threonyl-[protein] + UDP + H(+). It functions in the pathway protein modification; protein glycosylation. Glycopeptide transferase involved in O-linked oligosaccharide biosynthesis, which catalyzes the transfer of an N-acetyl-D-galactosamine residue to an already glycosylated peptide. In contrast to other proteins of the family, it does not act as a peptide transferase that transfers GalNAc onto serine or threonine residue on the protein receptor, but instead requires the prior addition of a GalNAc on a peptide before adding additional GalNAc moieties. Some peptide transferase activity is however not excluded, considering that its appropriate peptide substrate may remain unidentified. The chain is N-acetylgalactosaminyltransferase 7 (GALNT7) from Homo sapiens (Human).